A 410-amino-acid chain; its full sequence is Demethyl-4-deoxygadusol synthase (410 aa).

Residues 56-58 (DAN), 87-90 (EPDK), 119-123 (GLITD), 143-144 (TT), Lys-156, Lys-165, and 183-186 (LLRT) each bind NAD(+). 3 residues coordinate Zn(2+): Glu-198, His-271, and His-287.

It belongs to the sugar phosphate cyclases superfamily. DDGS family. As to quaternary structure, homodimer. NAD(+) is required as a cofactor. The cofactor is Co(2+). It depends on Zn(2+) as a cofactor.

The catalysed reaction is D-sedoheptulose 7-phosphate = (R)-demethyl-4-deoxygadusol + phosphate + H2O + H(+). Its function is as follows. Catalyzes the conversion of sedoheptulose 7-phosphate to demethyl-4-deoxygadusol (DDG). Involved in the synthesis of the mycosporine-like amino acid shinorine, a natural sunscreen compound that protects the cell against UV radiation. The protein is Demethyl-4-deoxygadusol synthase of Trichormus variabilis (strain ATCC 29413 / PCC 7937) (Anabaena variabilis).